The following is a 699-amino-acid chain: Osmotic avoidance abnormal protein 3 (699 aa).

One can recognise a Kinesin motor domain in the interval 4-327; it reads SVRVAVRCRP…LRYANRAKNI (324 aa). An ATP-binding site is contributed by 87-94; that stretch reads GQTGSGKT. Residues 339–523 adopt a coiled-coil conformation; that stretch reads DALLREYQEE…EIEDLHGEFE (185 aa).

This sequence belongs to the TRAFAC class myosin-kinesin ATPase superfamily. Kinesin family. Kinesin II subfamily. Expressed in an exclusive set of 26 chemosensory neurons whose dendritic endings are exposed to the external environment; six IL2 neurons of the inner labial sensilla, 8 pairs of amphid neurons in the head, and 2 pairs of phasmid neurons in the tail.

It is found in the cytoplasm. It localises to the cytoskeleton. Its subcellular location is the cell projection. The protein resides in the cilium. The protein localises to the cilium axoneme. It is found in the cilium basal body. Kinesin motor protein which is required for the anterograde intraflagellar transport (IFT) along the middle segment of the sensory neuron cilia together with the kinesin II motor complex (composed of klp-11, klp-20 and kap-1) and on its own, is required for IFT along the distal segment. In addition, regulates the length of cilia. May have a role during neurogenesis and axonal transport. The sequence is that of Osmotic avoidance abnormal protein 3 from Caenorhabditis elegans.